The sequence spans 61 residues: Short neurotoxin 1 (61 aa).

A compositionally biased stretch (polar residues) spans 1–16 (MECHNQQSSQPPTTKT). The interval 1-20 (MECHNQQSSQPPTTKTCPGE) is disordered. Intrachain disulfides connect Cys3/Cys23, Cys17/Cys40, Cys42/Cys53, and Cys54/Cys59.

Belongs to the three-finger toxin family. Short-chain subfamily. Type I alpha-neurotoxin sub-subfamily. In terms of tissue distribution, expressed by the venom gland.

The protein resides in the secreted. Its function is as follows. Binds to muscle nicotinic acetylcholine receptor (nAChR) and inhibit acetylcholine from binding to the receptor, thereby impairing neuromuscular transmission. The chain is Short neurotoxin 1 from Naja melanoleuca (Forest cobra).